The sequence spans 255 residues: Proteasome subunit alpha type-3 (255 aa).

Position 2 is an N-acetylserine (Ser2). An N6-acetyllysine mark is found at Lys57, Lys206, and Lys230. Ser243 and Ser250 each carry phosphoserine.

It belongs to the peptidase T1A family. As to quaternary structure, the 26S proteasome consists of a 20S proteasome core and two 19S regulatory subunits. The 20S proteasome core is a barrel-shaped complex made of 28 subunits that are arranged in four stacked rings. The two outer rings are each formed by seven alpha subunits, and the two inner rings are formed by seven beta subunits. The proteolytic activity is exerted by three beta-subunits PSMB5, PSMB6 and PSMB7. Interacts with AURKB. Interacts with CDKN1A. Interacts with MDM2 and RB1. Interacts with the C-terminus of TBXA2R isoform 2. Interacts with DNAJB2. (Microbial infection) Interacts with HIV-1 Tat protein. In terms of assembly, (Microbial infection) Interacts with hepatitis C virus (HCV) F protein. As to quaternary structure, (Microbial infection) Interacts with Epstein-Barr virus EBNA3 proteins.

Its subcellular location is the cytoplasm. The protein localises to the nucleus. Functionally, component of the 20S core proteasome complex involved in the proteolytic degradation of most intracellular proteins. This complex plays numerous essential roles within the cell by associating with different regulatory particles. Associated with two 19S regulatory particles, forms the 26S proteasome and thus participates in the ATP-dependent degradation of ubiquitinated proteins. The 26S proteasome plays a key role in the maintenance of protein homeostasis by removing misfolded or damaged proteins that could impair cellular functions, and by removing proteins whose functions are no longer required. Associated with the PA200 or PA28, the 20S proteasome mediates ubiquitin-independent protein degradation. This type of proteolysis is required in several pathways including spermatogenesis (20S-PA200 complex) or generation of a subset of MHC class I-presented antigenic peptides (20S-PA28 complex). Binds to the C-terminus of CDKN1A and thereby mediates its degradation. Negatively regulates the membrane trafficking of the cell-surface thromboxane A2 receptor (TBXA2R) isoform 2. The sequence is that of Proteasome subunit alpha type-3 from Homo sapiens (Human).